The chain runs to 410 residues: Beta-arrestin-1 (410 aa).

Residues 1 to 163 (MGDKGTRVFK…LEEKIHKRNS (163 aa)) are interaction with SRC. Residues 45-86 (PEYLKERRVYVTLTCAFRYGREDLDVLGLTFRKDLFVANVQS) are interaction with CHRM2. Position 47 is a phosphotyrosine (tyrosine 47). 1D-myo-inositol hexakisphosphate-binding residues include lysine 250, methionine 255, lysine 324, and lysine 326. The interval 318-410 (IVSYKVKVKL…GTGSPQLNNR (93 aa)) is interaction with TRAF6. The [DE]-X(1,2)-F-X-X-[FL]-X-X-X-R motif motif lies at 385-395 (RQRLKGMKDDK). Residues 389–410 (KGMKDDKEEEENGTGSPQLNNR) form a disordered region. The span at 401 to 410 (GTGSPQLNNR) shows a compositional bias: polar residues. Position 404 is a phosphoserine; by GRK5 (serine 404).

This sequence belongs to the arrestin family. In terms of assembly, monomer. Homodimer. Homooligomer; the self-association is mediated by InsP6-binding. Heterooligomer with ARRB2; the association is mediated by InsP6-binding. Interacts with ADRB2 (phosphorylated). Interacts with CHRM2 (phosphorylated). Interacts with LHCGR. Interacts with CYTH2 and CASR. Interacts with AP2B1 (dephosphorylated); phosphorylation of AP2B1 disrupts the interaction. Interacts (dephosphorylated at Ser-404) with CLTC. Interacts with CCR2 and GRK2. Interacts with CRR5. Interacts with PTAFR (phosphorylated on serine residues). Interacts with CLTC and MAP2K3. Interacts with CREB1. Interacts with TRAF6. Interacts with IGF1R and MDM2. Interacts with C5AR1. Interacts with PDE4D. Interacts with SRC (via the SH3 domain and the protein kinase domain); the interaction is independent of the phosphorylation state of SRC C-terminus. Interacts with TACR1. Interacts with RAF1. Interacts with CHUK, IKBKB and MAP3K14. Interacts with DVL1; the interaction is enhanced by phosphorylation of DVL1. Interacts with DVL2; the interaction is enhanced by phosphorylation of DVL2. Interacts with IGF1R. Associates with MAP kinase p38. Part of a MAPK signaling complex consisting of TACR1, ARRB1, SRC, MAPK1 (activated) and MAPK3 (activated). Part of a MAPK signaling complex consisting of F2RL1, ARRB1, RAF1, MAPK1 (activated) and MAPK3 (activated). Interacts with GPR143. Interacts with MAP2K4/MKK4. Interacts with HCK and CXCR1 (phosphorylated). Interacts with ACKR3 and ACKR4. Interacts with ARRDC1; the interaction is direct. Interacts with GPR61, GPR62 and GPR135. Post-translationally, constitutively phosphorylated at in the cytoplasm. At the plasma membrane, is rapidly dephosphorylated, a process that is required for clathrin binding and ADRB2 endocytosis but not for ADRB2 binding and desensitization. Once internalized, is rephosphorylated. In terms of processing, the ubiquitination status appears to regulate the formation and trafficking of beta-arrestin-GPCR complexes and signaling. Ubiquitination appears to occur GPCR-specific. Ubiquitinated by MDM2; the ubiquitination is required for rapid internalization of ADRB2. Deubiquitinated by USP33; the deubiquitination leads to a dissociation of the beta-arrestin-GPCR complex. Stimulation of a class A GPCR, such as ADRB2, induces transient ubiquitination and subsequently promotes association with USP33.

It is found in the cytoplasm. The protein localises to the nucleus. It localises to the cell membrane. The protein resides in the membrane. Its subcellular location is the clathrin-coated pit. It is found in the cell projection. The protein localises to the pseudopodium. It localises to the cytoplasmic vesicle. In terms of biological role, functions in regulating agonist-mediated G-protein coupled receptor (GPCR) signaling by mediating both receptor desensitization and resensitization processes. During homologous desensitization, beta-arrestins bind to the GPRK-phosphorylated receptor and sterically preclude its coupling to the cognate G-protein; the binding appears to require additional receptor determinants exposed only in the active receptor conformation. The beta-arrestins target many receptors for internalization by acting as endocytic adapters (CLASPs, clathrin-associated sorting proteins) and recruiting the GPRCs to the adapter protein 2 complex 2 (AP-2) in clathrin-coated pits (CCPs). However, the extent of beta-arrestin involvement appears to vary significantly depending on the receptor, agonist and cell type. Internalized arrestin-receptor complexes traffic to intracellular endosomes, where they remain uncoupled from G-proteins. Two different modes of arrestin-mediated internalization occur. Class A receptors, like ADRB2, OPRM1, ENDRA, D1AR and ADRA1B dissociate from beta-arrestin at or near the plasma membrane and undergo rapid recycling. Class B receptors, like AVPR2, AGTR1, NTSR1, TRHR and TACR1 internalize as a complex with arrestin and traffic with it to endosomal vesicles, presumably as desensitized receptors, for extended periods of time. Receptor resensitization then requires that receptor-bound arrestin is removed so that the receptor can be dephosphorylated and returned to the plasma membrane. Involved in internalization of P2RY4 and UTP-stimulated internalization of P2RY2. Involved in phosphorylation-dependent internalization of OPRD1 ands subsequent recycling. Involved in the degradation of cAMP by recruiting cAMP phosphodiesterases to ligand-activated receptors. Beta-arrestins function as multivalent adapter proteins that can switch the GPCR from a G-protein signaling mode that transmits short-lived signals from the plasma membrane via small molecule second messengers and ion channels to a beta-arrestin signaling mode that transmits a distinct set of signals that are initiated as the receptor internalizes and transits the intracellular compartment. Acts as a signaling scaffold for MAPK pathways such as MAPK1/3 (ERK1/2). ERK1/2 activated by the beta-arrestin scaffold is largely excluded from the nucleus and confined to cytoplasmic locations such as endocytic vesicles, also called beta-arrestin signalosomes. Recruits c-Src/SRC to ADRB2 resulting in ERK activation. GPCRs for which the beta-arrestin-mediated signaling relies on both ARRB1 and ARRB2 (codependent regulation) include ADRB2, F2RL1 and PTH1R. For some GPCRs the beta-arrestin-mediated signaling relies on either ARRB1 or ARRB2 and is inhibited by the other respective beta-arrestin form (reciprocal regulation). Inhibits ERK1/2 signaling in AGTR1- and AVPR2-mediated activation (reciprocal regulation). Is required for SP-stimulated endocytosis of NK1R and recruits c-Src/SRC to internalized NK1R resulting in ERK1/2 activation, which is required for the antiapoptotic effects of SP. Is involved in proteinase-activated F2RL1-mediated ERK activity. Acts as a signaling scaffold for the AKT1 pathway. Is involved in alpha-thrombin-stimulated AKT1 signaling. Is involved in IGF1-stimulated AKT1 signaling leading to increased protection from apoptosis. Involved in activation of the p38 MAPK signaling pathway and in actin bundle formation. Involved in F2RL1-mediated cytoskeletal rearrangement and chemotaxis. Involved in AGTR1-mediated stress fiber formation by acting together with GNAQ to activate RHOA. Appears to function as signaling scaffold involved in regulation of MIP-1-beta-stimulated CCR5-dependent chemotaxis. Involved in attenuation of NF-kappa-B-dependent transcription in response to GPCR or cytokine stimulation by interacting with and stabilizing CHUK. May serve as nuclear messenger for GPCRs. Involved in OPRD1-stimulated transcriptional regulation by translocating to CDKN1B and FOS promoter regions and recruiting EP300 resulting in acetylation of histone H4. Involved in regulation of LEF1 transcriptional activity via interaction with DVL1 and/or DVL2 Also involved in regulation of receptors other than GPCRs. Involved in Toll-like receptor and IL-1 receptor signaling through the interaction with TRAF6 which prevents TRAF6 autoubiquitination and oligomerization required for activation of NF-kappa-B and JUN. Involved in IL8-mediated granule release in neutrophils. Binds phosphoinositides. Binds inositolhexakisphosphate (InsP6). Required for atypical chemokine receptor ACKR2-induced RAC1-LIMK1-PAK1-dependent phosphorylation of cofilin (CFL1) and for the up-regulation of ACKR2 from endosomal compartment to cell membrane, increasing its efficiency in chemokine uptake and degradation. Involved in the internalization of the atypical chemokine receptor ACKR3. Negatively regulates the NOTCH signaling pathway by mediating the ubiquitination and degradation of NOTCH1 by ITCH. Participates in the recruitment of the ubiquitin-protein ligase to the receptor. The polypeptide is Beta-arrestin-1 (ARRB1) (Macaca fascicularis (Crab-eating macaque)).